A 64-amino-acid polypeptide reads, in one-letter code: Large ribosomal subunit protein bL33c (64 aa).

It belongs to the bacterial ribosomal protein bL33 family.

Its subcellular location is the plastid. The protein resides in the chloroplast. The sequence is that of Large ribosomal subunit protein bL33c from Huperzia lucidula (Shining clubmoss).